The sequence spans 249 residues: MAGHSKWANIKRQKARVDAKKGSLFTKLSRAIIVAARNGLPDPDGNFQLRAAVEKAKAAGMPSENIERAIAKGAGNWSDDSPLEEVRYEGYGPGGVAVLIEAMTDNRNRTAAEVREAFSKTGGSLGEAGCVSWLFRQKGVISLEEVLDPEALLLAVAEAGGDDFKVEGTGAEVYCDYSLLEQVATYLKKEGYPVQDAAIRWIPSTEVHVEDPDTAKSVLALMERLDNLDDVQNVYANFEIDEAVMESLA.

The protein belongs to the TACO1 family.

It is found in the cytoplasm. The sequence is that of Probable transcriptional regulatory protein CYB_1350 from Synechococcus sp. (strain JA-2-3B'a(2-13)) (Cyanobacteria bacterium Yellowstone B-Prime).